Consider the following 203-residue polypeptide: MIGRLNGILVEKHAPEIVLDVGGVGYELQVPMTSFYELPELEQSATLYTHFVVREDAQLLYGFITKQERALFRLLIKTNGVGPKLALTILSGMTAGEFVSCVERDDIVTLVKLPGVGKKTAERLVVEMRDKLKSLLEASVGNEREFMLQTNYTAPAANAEEDAISALVSLGYKPPQASRAVSKAYKEGMDTETLIKLALKSML.

A domain I region spans residues 1-64; sequence MIGRLNGILV…EDAQLLYGFI (64 aa). Residues 65–143 are domain II; the sequence is TKQERALFRL…SLLEASVGNE (79 aa). Residues 144–154 form a flexible linker region; sequence REFMLQTNYTA. Positions 155 to 203 are domain III; the sequence is PAANAEEDAISALVSLGYKPPQASRAVSKAYKEGMDTETLIKLALKSML.

The protein belongs to the RuvA family. As to quaternary structure, homotetramer. Forms an RuvA(8)-RuvB(12)-Holliday junction (HJ) complex. HJ DNA is sandwiched between 2 RuvA tetramers; dsDNA enters through RuvA and exits via RuvB. An RuvB hexamer assembles on each DNA strand where it exits the tetramer. Each RuvB hexamer is contacted by two RuvA subunits (via domain III) on 2 adjacent RuvB subunits; this complex drives branch migration. In the full resolvosome a probable DNA-RuvA(4)-RuvB(12)-RuvC(2) complex forms which resolves the HJ.

The protein localises to the cytoplasm. Functionally, the RuvA-RuvB-RuvC complex processes Holliday junction (HJ) DNA during genetic recombination and DNA repair, while the RuvA-RuvB complex plays an important role in the rescue of blocked DNA replication forks via replication fork reversal (RFR). RuvA specifically binds to HJ cruciform DNA, conferring on it an open structure. The RuvB hexamer acts as an ATP-dependent pump, pulling dsDNA into and through the RuvAB complex. HJ branch migration allows RuvC to scan DNA until it finds its consensus sequence, where it cleaves and resolves the cruciform DNA. This Shewanella denitrificans (strain OS217 / ATCC BAA-1090 / DSM 15013) protein is Holliday junction branch migration complex subunit RuvA.